Here is a 125-residue protein sequence, read N- to C-terminus: Holo-[acyl-carrier-protein] synthase (125 aa).

The Mg(2+) site is built by Asp-8 and Glu-57.

The protein belongs to the P-Pant transferase superfamily. AcpS family. It depends on Mg(2+) as a cofactor.

It is found in the cytoplasm. The enzyme catalyses apo-[ACP] + CoA = holo-[ACP] + adenosine 3',5'-bisphosphate + H(+). Transfers the 4'-phosphopantetheine moiety from coenzyme A to a Ser of acyl-carrier-protein. This is Holo-[acyl-carrier-protein] synthase from Solibacter usitatus (strain Ellin6076).